Reading from the N-terminus, the 749-residue chain is Signal transducer and activator of transcription 4 (749 aa).

The region spanning 570-665 (WIDGYIMGFV…ENPLKYLYPD (96 aa)) is the SH2 domain. K668 carries the post-translational modification N6-acetyllysine. Phosphotyrosine; by JAK is present on Y694. S722 is modified (phosphoserine).

Belongs to the transcription factor STAT family. As to quaternary structure, forms a homodimer or a heterodimer with a related family member. Interacts with ARL2BP. Interacts with STAT1. Interacts with JUN; this complex efficiently interacts with the AP-1-related sequence of the IFN-gamma promoter. Acetylation at Lys-668 is required for JAK2-mediated phosphorylation and activation of STAT4. In terms of processing, tyrosine phosphorylated upon IL12 and IFN-alpha activation, but not by IFN-gamma in T-lymphocytes and NK cells. Serine phosphorylation is required for maximal transcriptional activity but not for DNA binding. Phosphorylation by MAP2K6 at Ser-722 is required for full transcriptional activity induced by IL12. However this serine phosphorylation is not required for cell proliferation although critical for IFN-gamma production. Expression is restricted to testis, thymus, and spleen.

It is found in the cytoplasm. The protein resides in the nucleus. Transcriptional regulator mainly expressed in hematopoietic cells that plays a critical role in cellular growth, differentiation and immune response. Plays a key role in the differentiation of T-helper 1 cells and the production of interferon-gamma. Also participates in multiple neutrophil functions including chemotaxis and production of the neutrophil extracellular traps. After IL12 binding to its receptor IL12RB2, STAT4 interacts with the intracellular domain of IL12RB2 and becomes tyrosine phosphorylated. Phosphorylated STAT4 then homodimerizes and migrates to the nucleus where it can recognize STAT target sequences present in IL12 responsive genes. Although IL12 appears to be the predominant activating signal, STAT4 can also be phosphorylated and activated in response to IFN-gamma stimulation via JAK1 and TYK2 and in response to different interleukins including IL23, IL2 and IL35. Transcription activation of IFN-gamma gene is mediated by interaction with JUN that forms a complex that efficiently interacts with the AP-1-related sequence of the IFN-gamma promoter. In response to IFN-alpha/beta signaling, acts as a transcriptional repressor and suppresses IL5 and IL13 mRNA expression during response to T-cell receptor (TCR) activation. The sequence is that of Signal transducer and activator of transcription 4 (Stat4) from Mus musculus (Mouse).